The following is a 460-amino-acid chain: Interleukin-6 receptor subunit alpha (460 aa).

The signal sequence occupies residues 1–19; that stretch reads MLTVGCTLLVALLAAPAVA. One can recognise an Ig-like C2-type domain in the interval 20–116; sequence LVLGSCRALE…DVPPEEPKLS (97 aa). The Extracellular segment spans residues 20–364; that stretch reads LVLGSCRALE…VQESSSMSLP (345 aa). Cystine bridges form between cysteine 25–cysteine 190, cysteine 47–cysteine 92, cysteine 117–cysteine 128, and cysteine 162–cysteine 173. N-linked (GlcNAc...) asparagine glycosylation is found at asparagine 32 and asparagine 55. 2 consecutive Fibronectin type-III domains span residues 109–214 and 215–313; these read PPEE…VQPD and PPAN…TPWI. An N-linked (GlcNAc...) asparagine glycan is attached at asparagine 150. Asparagine 218 carries N-linked (GlcNAc...) asparagine glycosylation. The short motif at 300-304 is the WSXWS motif element; it reads WSEWS. The chain crosses the membrane as a helical span at residues 365–385; that stretch reads TFLVAGGSLAFGLLLCVFIIL. At 386 to 460 the chain is on the cytoplasmic side; sequence RLKQKWKSEA…NSNRDYLFPR (75 aa).

The protein belongs to the type I cytokine receptor family. Type 3 subfamily. In terms of assembly, component of a hexamer of two molecules each of IL6, IL6R and IL6ST; first binds to IL6 to associate with the signaling subunit IL6ST. Interacts (via N-terminal ectodomain) with SORL1; this interaction may affect IL6-binding to IL6R, hence decrease IL6 'classic-signaling'. As to quaternary structure, also interacts with SORL1; this interaction leads to soluble IL6R internalization. May form a trimeric complex with the soluble SORL1 ectodomain and circulating IL6 receptor; this interaction might stabilize circulating IL6, hence promote IL6 'trans-signaling'. In terms of processing, a short soluble form is also released from the membrane by proteolysis. The sIL6R is formed by limited proteolysis of membrane-bound receptors, a process referred to as ectodomain shedding. mIL6R is cleaved by the proteases ADAM10 and ADAM17. Glycosylated. Glycosylation is dispensable for transport, signaling, and cell-surface turnover. Glycosylation at Asn-55 is a protease-regulatory exosite. Glycosylation is required for ADAM17-mediated proteolysis. Expressed by dendritic cells. In terms of tissue distribution, detected in the cerebrospinal fluid.

The protein resides in the cell membrane. It is found in the secreted. Its activity is regulated as follows. Classic and trans-signaling are both inhibited by tocilizumab, a humanized monoclonal antibody that blocks interleukin IL6R signaling. Part of the receptor for interleukin 6. Binds to IL6 with low affinity, but does not transduce a signal. Signal activation necessitate an association with IL6ST. Activation leads to the regulation of the immune response, acute-phase reactions and hematopoiesis. The interaction with membrane-bound IL6R and IL6ST stimulates 'classic signaling', the restricted expression of the IL6R limits classic IL6 signaling to only a few tissues such as the liver and some cells of the immune system. Whereas the binding of IL6 and soluble IL6R to IL6ST stimulates 'trans-signaling'. Alternatively, 'cluster signaling' occurs when membrane-bound IL6:IL6R complexes on transmitter cells activate IL6ST receptors on neighboring receiver cells. In terms of biological role, signaling via the membrane-bound IL6R is mostly regenerative and anti-inflammatory. Drives naive CD4(+) T cells to the Th17 lineage, through 'cluster signaling' by dendritic cells. Its function is as follows. Soluble form of IL6 receptor (sIL6R) that acts as an agonist of IL6 activity. The IL6:sIL6R complex (hyper-IL6) binds to IL6ST/gp130 on cell surfaces and induces signaling also on cells that do not express membrane-bound IL6R in a process called IL6 'trans-signaling'. sIL6R is causative for the pro-inflammatory properties of IL6 and an important player in the development of chronic inflammatory diseases. In complex with IL6, is required for induction of VEGF production. Plays a protective role during liver injury, being required for maintenance of tissue regeneration. 'Trans-signaling' in central nervous system regulates energy and glucose homeostasis. The polypeptide is Interleukin-6 receptor subunit alpha (Mus musculus (Mouse)).